The primary structure comprises 110 residues: UPF0060 membrane protein Noc_2955 (110 aa).

4 consecutive transmembrane segments (helical) span residues 7 to 27, 33 to 53, 63 to 83, and 87 to 107; these read VGLF…AYLW, TIWL…LLSL, AAYG…VNGI, and TWDL…MFAP.

Belongs to the UPF0060 family.

Its subcellular location is the cell inner membrane. The protein is UPF0060 membrane protein Noc_2955 of Nitrosococcus oceani (strain ATCC 19707 / BCRC 17464 / JCM 30415 / NCIMB 11848 / C-107).